A 227-amino-acid chain; its full sequence is Cytochrome c oxidase subunit 2 (227 aa).

At 1–14 the chain is on the mitochondrial intermembrane side; the sequence is MAHSFQLGFQDATS. The helical transmembrane segment at 15 to 45 threads the bilayer; that stretch reads PIMEELLHFHDHTLMIVFLISSLVLYIITLM. Over 46-59 the chain is Mitochondrial matrix; the sequence is LTTKLTHTSTMDAQ. Residues 60 to 87 traverse the membrane as a helical segment; sequence EVETVWTILPAIILILIALPSLRILYLM. Residues 88–227 lie on the Mitochondrial intermembrane side of the membrane; sequence DEINTPSLTV…HFENWSTSMI (140 aa). 6 residues coordinate Cu cation: H161, C196, E198, C200, H204, and M207. Residue E198 participates in Mg(2+) binding.

This sequence belongs to the cytochrome c oxidase subunit 2 family. Component of the cytochrome c oxidase (complex IV, CIV), a multisubunit enzyme composed of 14 subunits. The complex is composed of a catalytic core of 3 subunits MT-CO1, MT-CO2 and MT-CO3, encoded in the mitochondrial DNA, and 11 supernumerary subunits COX4I, COX5A, COX5B, COX6A, COX6B, COX6C, COX7A, COX7B, COX7C, COX8 and NDUFA4, which are encoded in the nuclear genome. The complex exists as a monomer or a dimer and forms supercomplexes (SCs) in the inner mitochondrial membrane with NADH-ubiquinone oxidoreductase (complex I, CI) and ubiquinol-cytochrome c oxidoreductase (cytochrome b-c1 complex, complex III, CIII), resulting in different assemblies (supercomplex SCI(1)III(2)IV(1) and megacomplex MCI(2)III(2)IV(2)). Found in a complex with TMEM177, COA6, COX18, COX20, SCO1 and SCO2. Interacts with TMEM177 in a COX20-dependent manner. Interacts with COX20. Interacts with COX16. It depends on Cu cation as a cofactor.

The protein localises to the mitochondrion inner membrane. The catalysed reaction is 4 Fe(II)-[cytochrome c] + O2 + 8 H(+)(in) = 4 Fe(III)-[cytochrome c] + 2 H2O + 4 H(+)(out). In terms of biological role, component of the cytochrome c oxidase, the last enzyme in the mitochondrial electron transport chain which drives oxidative phosphorylation. The respiratory chain contains 3 multisubunit complexes succinate dehydrogenase (complex II, CII), ubiquinol-cytochrome c oxidoreductase (cytochrome b-c1 complex, complex III, CIII) and cytochrome c oxidase (complex IV, CIV), that cooperate to transfer electrons derived from NADH and succinate to molecular oxygen, creating an electrochemical gradient over the inner membrane that drives transmembrane transport and the ATP synthase. Cytochrome c oxidase is the component of the respiratory chain that catalyzes the reduction of oxygen to water. Electrons originating from reduced cytochrome c in the intermembrane space (IMS) are transferred via the dinuclear copper A center (CU(A)) of subunit 2 and heme A of subunit 1 to the active site in subunit 1, a binuclear center (BNC) formed by heme A3 and copper B (CU(B)). The BNC reduces molecular oxygen to 2 water molecules using 4 electrons from cytochrome c in the IMS and 4 protons from the mitochondrial matrix. The chain is Cytochrome c oxidase subunit 2 (MT-CO2) from Cephalopachus bancanus (Western tarsier).